Here is a 59-residue protein sequence, read N- to C-terminus: Lantipeptide Flvbeta.f (59 aa).

Positions 1–27 (MEKMNNIAGITPENELDEMFDDSVVGA) are cleaved as a propeptide — cleaved by FlvT. A 2,3-didehydrobutyrine; by FlvM2 mark is found at threonine 31 and threonine 32. 2 consecutive cross-links (beta-methyllanthionine (Thr-Cys); by FlvM2) follow at residues 41–47 (TKNPQIC) and 53–56 (TVKC).

In terms of processing, contains DL-beta-methyllanthionine, when coepressed in E.coli with the flavecin synthetase FlvM2.

It localises to the secreted. In terms of biological role, lanthionine-containing peptide that does probably not show antibacterial activity, since its analog [+7]Flvbeta.f does not show antibacterial activity against M.luteus. Also does not show antibiotic activity when tested with [Del2]Flvalpha.a, an analog of Flvalpha.a, which is encoded by the same operon than Flvbeta.f. The bactericidal activity of lantibiotics is based on depolarization of energized bacterial cytoplasmic membranes, initiated by the formation of aqueous transmembrane pores. In Ruminococcus flavefaciens, this protein is Lantipeptide Flvbeta.f.